The primary structure comprises 360 residues: Phospho-N-acetylmuramoyl-pentapeptide-transferase (360 aa).

Transmembrane regions (helical) follow at residues 21 to 41, 73 to 93, 94 to 114, 132 to 152, 168 to 188, 199 to 219, 236 to 256, 263 to 283, 288 to 308, and 338 to 358; these read YLSF…LWMG, TMGG…WANL, SNPY…VGFV, WKYF…YAYG, VMPQ…VGTS, GLAI…AWAT, ASEL…FLWF, VFMG…IAVL, LVLV…ILQV, and VIVR…ATLK.

The protein belongs to the glycosyltransferase 4 family. MraY subfamily. Mg(2+) is required as a cofactor.

The protein localises to the cell inner membrane. The enzyme catalyses UDP-N-acetyl-alpha-D-muramoyl-L-alanyl-gamma-D-glutamyl-meso-2,6-diaminopimeloyl-D-alanyl-D-alanine + di-trans,octa-cis-undecaprenyl phosphate = di-trans,octa-cis-undecaprenyl diphospho-N-acetyl-alpha-D-muramoyl-L-alanyl-D-glutamyl-meso-2,6-diaminopimeloyl-D-alanyl-D-alanine + UMP. Its pathway is cell wall biogenesis; peptidoglycan biosynthesis. Functionally, catalyzes the initial step of the lipid cycle reactions in the biosynthesis of the cell wall peptidoglycan: transfers peptidoglycan precursor phospho-MurNAc-pentapeptide from UDP-MurNAc-pentapeptide onto the lipid carrier undecaprenyl phosphate, yielding undecaprenyl-pyrophosphoryl-MurNAc-pentapeptide, known as lipid I. The chain is Phospho-N-acetylmuramoyl-pentapeptide-transferase from Vibrio vulnificus (strain CMCP6).